The sequence spans 227 residues: Large ribosomal subunit protein uL3 (227 aa).

The disordered stretch occupies residues 129-154; the sequence is GMQPVSHGQSDRTRSRGSSGAQGPQK.

This sequence belongs to the universal ribosomal protein uL3 family. Part of the 50S ribosomal subunit. Forms a cluster with proteins L14 and L19.

One of the primary rRNA binding proteins, it binds directly near the 3'-end of the 23S rRNA, where it nucleates assembly of the 50S subunit. The sequence is that of Large ribosomal subunit protein uL3 from Endomicrobium trichonymphae.